The primary structure comprises 118 residues: Putative membrane protein insertion efficiency factor (118 aa).

Residues 76 to 118 (WDPVPQRRPRRRDAAAADAAMSAPHACKGSPHAVVGDTNDGST) are disordered. Low complexity predominate over residues 91-101 (AADAAMSAPHA).

This sequence belongs to the UPF0161 family.

It localises to the cell membrane. Its function is as follows. Could be involved in insertion of integral membrane proteins into the membrane. The protein is Putative membrane protein insertion efficiency factor of Nocardia farcinica (strain IFM 10152).